We begin with the raw amino-acid sequence, 427 residues long: Hydroxylamine reductase (427 aa).

[4Fe-4S] cluster is bound by residues Cys3, Cys6, Cys15, and Cys21. Positions 129, 153, 197, 283, 311, 336, 370, and 372 each coordinate hybrid [4Fe-2O-2S] cluster. Cys283 is modified (cysteine persulfide).

Belongs to the HCP family. The cofactor is [4Fe-4S] cluster. Requires hybrid [4Fe-2O-2S] cluster as cofactor.

The protein localises to the cytoplasm. It catalyses the reaction A + NH4(+) + H2O = hydroxylamine + AH2 + H(+). Its function is as follows. Catalyzes the reduction of hydroxylamine to form NH(3) and H(2)O. This Methanothermobacter thermautotrophicus (strain ATCC 29096 / DSM 1053 / JCM 10044 / NBRC 100330 / Delta H) (Methanobacterium thermoautotrophicum) protein is Hydroxylamine reductase.